The chain runs to 415 residues: Elongation factor 1-gamma 1 (415 aa).

N-acetylserine is present on serine 2. A GST N-terminal domain is found at 2–78; that stretch reads SQGTLYANFR…YLVKLSQDDK (77 aa). Threonine 32 is subject to Phosphothreonine. Residues 89–215 enclose the GST C-terminal domain; it reads DLNAQAQIIR…KDFKFADKPL (127 aa). The segment at 212–256 is disordered; it reads DKPLSPPQKKKEKKAPAAAPAASKKKEEAKPAATETETSSKKPKH. Positions 254-415 constitute an EF-1-gamma C-terminal domain; sequence PKHPLELLGK…KEIVDGKVLK (162 aa).

The eukaryotic elongation factor 1 complex (eEF1) is probably a heterohexamer. Two trimeric complexes, each composed of eEF1A (TEF1 or TEF2), eEF1Balpha (EFB1) and eEF1Bgamma (CAM1 or TEF4), are probably dimerized via the eF1Bgamma subunits. The eEF1B subcomplex with the GEF activity is formed of eEF1Balpha and eEF1Bgamma. CAM1 interacts with EFB1. Component of a complex bound to MXR1 promoter region.

The protein localises to the cytoplasm. It localises to the nucleus. Its pathway is protein biosynthesis; polypeptide chain elongation. Functionally, subunit of the eukaryotic elongation factor 1 complex (eEF1). Probably plays a role in anchoring the complex to other cellular components. May be involved in transcriptional regulation of MXR1. This chain is Elongation factor 1-gamma 1 (CAM1), found in Saccharomyces cerevisiae (strain ATCC 204508 / S288c) (Baker's yeast).